Reading from the N-terminus, the 498-residue chain is Galactose-1-phosphate uridylyltransferase (498 aa).

Belongs to the galactose-1-phosphate uridylyltransferase type 2 family.

It is found in the cytoplasm. It catalyses the reaction alpha-D-galactose 1-phosphate + UDP-alpha-D-glucose = alpha-D-glucose 1-phosphate + UDP-alpha-D-galactose. The protein operates within carbohydrate metabolism; galactose metabolism. This Staphylococcus carnosus (strain TM300) protein is Galactose-1-phosphate uridylyltransferase.